An 81-amino-acid polypeptide reads, in one-letter code: Serine rich endogenous peptide 21 (81 aa).

Positions 1–40 (MLELHFEFIDLNQPKMYKFVVCLLTLSFLLLSGLSNTALA) are cleaved as a signal peptide. The SCOOP motif motif lies at 65 to 79 (KVRVLPSASRRGPGQ). Positions 71–73 (SAS) match the SxS motif essential for MIK2 binding motif.

It belongs to the serine rich endogenous peptide (SCOOP) phytocytokine family. Interacts with MIK2 (via extracellular leucine-rich repeat domain); this interaction triggers the formation of complex between MIK2 and the BAK1/SERK3 and SERK4 coreceptors, and subsequent BAK1 activation by phosphorylation.

The protein localises to the cell membrane. The protein resides in the secreted. It localises to the extracellular space. It is found in the apoplast. Functionally, brassicaceae-specific phytocytokine (plant endogenous peptide released into the apoplast) perceived by MIK2 in a BAK1/SERK3 and SERK4 coreceptors-dependent manner, that modulates various physiological and antimicrobial processes including growth prevention and reactive oxygen species (ROS) response regulation. In Arabidopsis thaliana (Mouse-ear cress), this protein is Serine rich endogenous peptide 21.